Here is a 137-residue protein sequence, read N- to C-terminus: Small ribosomal subunit protein uS12 (137 aa).

Residues 1 to 43 are disordered; the sequence is MPTINQLVRKGRVSKTKKSDSPALNKGYNSFKKRMTDQNAPQK.

Belongs to the universal ribosomal protein uS12 family. In terms of assembly, part of the 30S ribosomal subunit. Contacts proteins S8 and S17. May interact with IF1 in the 30S initiation complex.

With S4 and S5 plays an important role in translational accuracy. Its function is as follows. Interacts with and stabilizes bases of the 16S rRNA that are involved in tRNA selection in the A site and with the mRNA backbone. Located at the interface of the 30S and 50S subunits, it traverses the body of the 30S subunit contacting proteins on the other side and probably holding the rRNA structure together. The combined cluster of proteins S8, S12 and S17 appears to hold together the shoulder and platform of the 30S subunit. This Oceanobacillus iheyensis (strain DSM 14371 / CIP 107618 / JCM 11309 / KCTC 3954 / HTE831) protein is Small ribosomal subunit protein uS12.